The primary structure comprises 278 residues: 2-dehydro-3-deoxyphosphooctonate aldolase (278 aa).

It belongs to the KdsA family.

It is found in the cytoplasm. It catalyses the reaction D-arabinose 5-phosphate + phosphoenolpyruvate + H2O = 3-deoxy-alpha-D-manno-2-octulosonate-8-phosphate + phosphate. The protein operates within carbohydrate biosynthesis; 3-deoxy-D-manno-octulosonate biosynthesis; 3-deoxy-D-manno-octulosonate from D-ribulose 5-phosphate: step 2/3. Its pathway is bacterial outer membrane biogenesis; lipopolysaccharide biosynthesis. The polypeptide is 2-dehydro-3-deoxyphosphooctonate aldolase (Koribacter versatilis (strain Ellin345)).